The chain runs to 217 residues: Small ribosomal subunit protein uS3 (217 aa).

Residues 38–106 (IRKFVQKELA…QVHINIIEIK (69 aa)) form the KH type-2 domain.

Belongs to the universal ribosomal protein uS3 family. In terms of assembly, part of the 30S ribosomal subunit. Forms a tight complex with proteins S10 and S14.

In terms of biological role, binds the lower part of the 30S subunit head. Binds mRNA in the 70S ribosome, positioning it for translation. The protein is Small ribosomal subunit protein uS3 of Streptococcus pneumoniae serotype 19F (strain G54).